The following is a 132-amino-acid chain: Small ribosomal subunit protein uS8 (132 aa).

The protein belongs to the universal ribosomal protein uS8 family. As to quaternary structure, part of the 30S ribosomal subunit. Contacts proteins S5 and S12.

One of the primary rRNA binding proteins, it binds directly to 16S rRNA central domain where it helps coordinate assembly of the platform of the 30S subunit. The protein is Small ribosomal subunit protein uS8 of Rhodococcus erythropolis (strain PR4 / NBRC 100887).